A 248-amino-acid chain; its full sequence is Phosphoribosylaminoimidazole-succinocarboxamide synthase (248 aa).

It belongs to the SAICAR synthetase family.

It catalyses the reaction 5-amino-1-(5-phospho-D-ribosyl)imidazole-4-carboxylate + L-aspartate + ATP = (2S)-2-[5-amino-1-(5-phospho-beta-D-ribosyl)imidazole-4-carboxamido]succinate + ADP + phosphate + 2 H(+). Its pathway is purine metabolism; IMP biosynthesis via de novo pathway; 5-amino-1-(5-phospho-D-ribosyl)imidazole-4-carboxamide from 5-amino-1-(5-phospho-D-ribosyl)imidazole-4-carboxylate: step 1/2. The sequence is that of Phosphoribosylaminoimidazole-succinocarboxamide synthase (purC) from Methanothermobacter thermautotrophicus (strain ATCC 29096 / DSM 1053 / JCM 10044 / NBRC 100330 / Delta H) (Methanobacterium thermoautotrophicum).